The following is a 492-amino-acid chain: Adenosylhomocysteinase (492 aa).

3 residues coordinate substrate: Thr68, Asp153, and Glu215. Residue 216 to 218 (TTT) participates in NAD(+) binding. Residues Lys245 and Asp249 each contribute to the substrate site. NAD(+)-binding positions include Asn250, 279–284 (GYGDVG), Glu302, Asn337, 358–360 (IGH), and Asn406.

This sequence belongs to the adenosylhomocysteinase family. The cofactor is NAD(+).

The protein resides in the cytoplasm. It catalyses the reaction S-adenosyl-L-homocysteine + H2O = L-homocysteine + adenosine. Its pathway is amino-acid biosynthesis; L-homocysteine biosynthesis; L-homocysteine from S-adenosyl-L-homocysteine: step 1/1. Functionally, may play a key role in the regulation of the intracellular concentration of adenosylhomocysteine. The polypeptide is Adenosylhomocysteinase (Mycobacterium leprae (strain Br4923)).